Consider the following 430-residue polypeptide: MIAGRRHFDCRPLHLAGNINYEPTVWSRADALKVNENDPTTTQPLVSADFPVMSDTVFIWDTMPLRELDGTVVSVNGWSVILTLTADRHPNDPQYLDANGRYDIKRDWEDRHGRARMCYWYSRTGKDWIFGGRVMAEGVSPTTREWAGTPILLNDKGDIDLYYTCVTPGAAIAKVRGRIVTSDQGVELEDFTLVKKLFEANGTYYQTEAQNSSWNFRDPSPFIDPNDGKLYMVFEGNVAGERGSHTVGAAELGPVPPGHEDVGGARFQVGCIGLAVAKDLSGEEWEILPPLVTAVGVNDQTERPHYVFQDGKYYLFTISHKFTYAEGLTGPDGVYGFVGEHLFGPYRPMNASGLVLGNPPEQPFQTYSHCVMPNGLVTSFIDSVPTEGEDYRIGGTEAPTVRILLKGDRSFVQEEYDYGYIPAMKDVTLS.

The sucrose site is built by W60, D61, A147, R217, and D218. Catalysis depends on D61, which acts as the Nucleophile. Catalysis depends on E302, which acts as the Proton donor/acceptor.

It belongs to the glycosyl hydrolase 68 family. In terms of assembly, homodimer.

The catalysed reaction is [6)-beta-D-fructofuranosyl-(2-&gt;](n) alpha-D-glucopyranoside + sucrose = [6)-beta-D-fructofuranosyl-(2-&gt;](n+1) alpha-D-glucopyranoside + D-glucose. Its activity is regulated as follows. Sucrose hydrolase activity is negatively affected by salt concentration. The levan polymerization rate increases sharply in relation to sucrose concentration reaching the maximum at 100 mM sucrose, and then steadily decreases, suggesting a strong inhibition of the activity by the substrate. Catalyzes the synthesis of levan, a fructose polymer, by transferring the fructosyl moiety from sucrose to a growing acceptor molecule. Also displays sucrose hydrolase activity. Can depolymerize the levan produced once substrate is completely exhausted. In Pseudomonas syringae pv. actinidiae, this protein is Levansucrase Lscgamma.